Here is a 406-residue protein sequence, read N- to C-terminus: Probable peptidoglycan glycosyltransferase FtsW (406 aa).

The next 9 membrane-spanning stretches (helical) occupy residues 22–42 (LWFV…VASA), 56–76 (FFMG…FMML), 86–106 (WGIL…VPGI), 116–136 (WINL…CMVV), 153–173 (LIGF…LLME), 186–206 (VIAL…IVIM), 280–300 (IWVE…FALM), 318–338 (FAGY…IINV), and 352–372 (LPLI…LFVV). A compositionally biased stretch (basic and acidic residues) spans 383–397 (SKGGESEERKRKSDE). The disordered stretch occupies residues 383–406 (SKGGESEERKRKSDESIDDGEALA).

This sequence belongs to the SEDS family. FtsW subfamily.

The protein resides in the cell inner membrane. The enzyme catalyses [GlcNAc-(1-&gt;4)-Mur2Ac(oyl-L-Ala-gamma-D-Glu-L-Lys-D-Ala-D-Ala)](n)-di-trans,octa-cis-undecaprenyl diphosphate + beta-D-GlcNAc-(1-&gt;4)-Mur2Ac(oyl-L-Ala-gamma-D-Glu-L-Lys-D-Ala-D-Ala)-di-trans,octa-cis-undecaprenyl diphosphate = [GlcNAc-(1-&gt;4)-Mur2Ac(oyl-L-Ala-gamma-D-Glu-L-Lys-D-Ala-D-Ala)](n+1)-di-trans,octa-cis-undecaprenyl diphosphate + di-trans,octa-cis-undecaprenyl diphosphate + H(+). Its pathway is cell wall biogenesis; peptidoglycan biosynthesis. Peptidoglycan polymerase that is essential for cell division. In Marinomonas mediterranea (strain ATCC 700492 / JCM 21426 / NBRC 103028 / MMB-1), this protein is Probable peptidoglycan glycosyltransferase FtsW.